Reading from the N-terminus, the 491-residue chain is Trypanothione reductase (491 aa).

35-52 lines the FAD pocket; the sequence is DVQATHGPPALVALGGTC. A disulfide bridge connects residues cysteine 52 and cysteine 57. Histidine 461 functions as the Proton acceptor in the catalytic mechanism.

Belongs to the class-I pyridine nucleotide-disulfide oxidoreductase family. As to quaternary structure, homodimer. FAD is required as a cofactor.

It localises to the cytoplasm. It catalyses the reaction trypanothione + NADP(+) = trypanothione disulfide + NADPH + H(+). Its function is as follows. Trypanothione is the parasite analog of glutathione; this enzyme is the equivalent of glutathione reductase. This Leishmania donovani protein is Trypanothione reductase (TPR).